Reading from the N-terminus, the 331-residue chain is Phenylalanine--tRNA ligase alpha subunit (331 aa).

E252 lines the Mg(2+) pocket.

This sequence belongs to the class-II aminoacyl-tRNA synthetase family. Phe-tRNA synthetase alpha subunit type 1 subfamily. As to quaternary structure, tetramer of two alpha and two beta subunits. Requires Mg(2+) as cofactor.

The protein resides in the cytoplasm. The catalysed reaction is tRNA(Phe) + L-phenylalanine + ATP = L-phenylalanyl-tRNA(Phe) + AMP + diphosphate + H(+). The chain is Phenylalanine--tRNA ligase alpha subunit from Marinomonas sp. (strain MWYL1).